We begin with the raw amino-acid sequence, 125 residues long: Small ribosomal subunit protein uS13 (125 aa).

A disordered region spans residues 92-125 (RRSLPVRGQRTQTNARTRKGKRKTVAGKKKATKK). Residues 107–125 (RTRKGKRKTVAGKKKATKK) are compositionally biased toward basic residues.

The protein belongs to the universal ribosomal protein uS13 family. Part of the 30S ribosomal subunit. Forms a loose heterodimer with protein S19. Forms two bridges to the 50S subunit in the 70S ribosome.

Functionally, located at the top of the head of the 30S subunit, it contacts several helices of the 16S rRNA. In the 70S ribosome it contacts the 23S rRNA (bridge B1a) and protein L5 of the 50S subunit (bridge B1b), connecting the 2 subunits; these bridges are implicated in subunit movement. Contacts the tRNAs in the A and P-sites. This Chlorobium phaeobacteroides (strain DSM 266 / SMG 266 / 2430) protein is Small ribosomal subunit protein uS13.